Here is an 84-residue protein sequence, read N- to C-terminus: MDNQFFKNIEKKTGVKMQDVMNLAGSLQNANFKDENTVRSVINRVAQMANRRVPKELEDKIVESITSGKEKLDFGTISKMMDNK.

It is found in the cytoplasm. Functionally, transcription factor involved in spore coat assembly and spore resistance. Required for gene regulation during the latter stages of sporulation. Regulates the transcription of at least cgeA, cotG and cotS. May directly or indirectly control the function of the GerE protein. The sequence is that of Sporulation-specific transcription factor SpoVIF from Bacillus subtilis (strain 168).